We begin with the raw amino-acid sequence, 308 residues long: Mannan endo-1,4-beta-mannosidase (308 aa).

The Proton donor role is filled by Glu-125. The Nucleophile role is filled by Glu-220. A disordered region spans residues Asp-284–Thr-308. Positions Gln-287–Thr-297 are enriched in polar residues.

This sequence belongs to the glycosyl hydrolase 5 (cellulase A) family.

The catalysed reaction is Random hydrolysis of (1-&gt;4)-beta-D-mannosidic linkages in mannans, galactomannans and glucomannans.. Functionally, catalyzes the endo hydrolysis of beta-1,4-linked mannan, galactomannan and glucomannan. It is able to hydrolyze mannosidic linkages that are flanked by mannose or glucose. The polypeptide is Mannan endo-1,4-beta-mannosidase (Salipaludibacillus agaradhaerens (Bacillus agaradhaerens)).